The chain runs to 554 residues: MRSDIIQKGYDKAPHRSLLRACGFKDEDFGKPIIGVANSYIDIVPGHVHLREFVEPIKEEIRKAGAIPVEFNTIGVDDGIAMGHYGMHYSLPSRELIADAIETVVEAHQLDGLICIPNCDKIVPGMLMGALRVNVPTVFISGGPMAAGKIGDKKVDLISVFEGVGKLNKGEITEKDLLVIEQNACPSCGSCSGLFTANSMNCLTEVLGLGLPGNGTTLAIDPRREMLARQAARQVVELVKIDLKPRDIVTKASFDNAFRVDIAMGGSSNTVLHLLAIAREAGIEYKMEDIDKISRETPTLCKISPSSDYHMDDLDRAGGISAIMKELLRNGLFDGKQRTVTTKTIEEIVKDVEIMDENVIRRIDNAYSKDGGLAILFGNLAPKGSVVKTAGVAKEMLQFKGKAICFDSEEEAIEGIRGGKVKPGHVVVIRYEGPKGGPGMREMLSPTSTIMGMGLGSSVALITDGRFSGGTRGACIGHISPEAAAGGPIGIVQDGDEILIDIPNRKLELLISQEEFDARLKAFKPKEKLIKSSWLKRYRKFVKDASEGAILSAD.

D78 contributes to the Mg(2+) binding site. C119 is a binding site for [2Fe-2S] cluster. Mg(2+)-binding residues include D120 and K121. K121 is modified (N6-carboxylysine). C191 contacts [2Fe-2S] cluster. E442 provides a ligand contact to Mg(2+). Residue S468 is the Proton acceptor of the active site.

Belongs to the IlvD/Edd family. Homodimer. [2Fe-2S] cluster is required as a cofactor. The cofactor is Mg(2+).

It carries out the reaction (2R)-2,3-dihydroxy-3-methylbutanoate = 3-methyl-2-oxobutanoate + H2O. The catalysed reaction is (2R,3R)-2,3-dihydroxy-3-methylpentanoate = (S)-3-methyl-2-oxopentanoate + H2O. Its pathway is amino-acid biosynthesis; L-isoleucine biosynthesis; L-isoleucine from 2-oxobutanoate: step 3/4. It functions in the pathway amino-acid biosynthesis; L-valine biosynthesis; L-valine from pyruvate: step 3/4. Functions in the biosynthesis of branched-chain amino acids. Catalyzes the dehydration of (2R,3R)-2,3-dihydroxy-3-methylpentanoate (2,3-dihydroxy-3-methylvalerate) into 2-oxo-3-methylpentanoate (2-oxo-3-methylvalerate) and of (2R)-2,3-dihydroxy-3-methylbutanoate (2,3-dihydroxyisovalerate) into 2-oxo-3-methylbutanoate (2-oxoisovalerate), the penultimate precursor to L-isoleucine and L-valine, respectively. The polypeptide is Dihydroxy-acid dehydratase (Hydrogenobaculum sp. (strain Y04AAS1)).